Reading from the N-terminus, the 248-residue chain is ATP synthase subunit a (248 aa).

6 helical membrane-spanning segments follow: residues 34 to 54, 91 to 111, 121 to 141, 147 to 167, 196 to 216, and 220 to 240; these read TNAT…LVFG, YFPY…LGLL, IAVT…LGFV, FLGL…LAVI, VFAA…AITA, and LEVL…CVYL.

The protein belongs to the ATPase A chain family. In terms of assembly, F-type ATPases have 2 components, CF(1) - the catalytic core - and CF(0) - the membrane proton channel. CF(1) has five subunits: alpha(3), beta(3), gamma(1), delta(1), epsilon(1). CF(0) has three main subunits: a(1), b(2) and c(9-12). The alpha and beta chains form an alternating ring which encloses part of the gamma chain. CF(1) is attached to CF(0) by a central stalk formed by the gamma and epsilon chains, while a peripheral stalk is formed by the delta and b chains.

It is found in the cell inner membrane. Its function is as follows. Key component of the proton channel; it plays a direct role in the translocation of protons across the membrane. This chain is ATP synthase subunit a, found in Paracoccus denitrificans (strain Pd 1222).